The chain runs to 103 residues: Pyrimidine/purine nucleoside phosphorylase (103 aa).

It belongs to the nucleoside phosphorylase PpnP family.

It catalyses the reaction a purine D-ribonucleoside + phosphate = a purine nucleobase + alpha-D-ribose 1-phosphate. The enzyme catalyses adenosine + phosphate = alpha-D-ribose 1-phosphate + adenine. The catalysed reaction is cytidine + phosphate = cytosine + alpha-D-ribose 1-phosphate. It carries out the reaction guanosine + phosphate = alpha-D-ribose 1-phosphate + guanine. It catalyses the reaction inosine + phosphate = alpha-D-ribose 1-phosphate + hypoxanthine. The enzyme catalyses thymidine + phosphate = 2-deoxy-alpha-D-ribose 1-phosphate + thymine. The catalysed reaction is uridine + phosphate = alpha-D-ribose 1-phosphate + uracil. It carries out the reaction xanthosine + phosphate = alpha-D-ribose 1-phosphate + xanthine. Functionally, catalyzes the phosphorolysis of diverse nucleosides, yielding D-ribose 1-phosphate and the respective free bases. Can use uridine, adenosine, guanosine, cytidine, thymidine, inosine and xanthosine as substrates. Also catalyzes the reverse reactions. This Shewanella putrefaciens (strain CN-32 / ATCC BAA-453) protein is Pyrimidine/purine nucleoside phosphorylase.